A 153-amino-acid polypeptide reads, in one-letter code: MSRVTAIISALVICIIVCLSWAVNHYRDNAITYKAQRDKNARELKLANAAITDMQMRQRDVAALDAKYTKELADAKAENDALRDDVAAGRRRLHIKAVCQSVREATTASGVDNAASPRLADTAERDYFTLRERLITMQKQLEGTQKYINEQCR.

Residues 1–3 lie on the Cytoplasmic side of the membrane; that stretch reads MSR. The helical; Signal-anchor for type II membrane protein transmembrane segment at 4 to 24 threads the bilayer; the sequence is VTAIISALVICIIVCLSWAVN. At 25–153 the chain is on the periplasmic side; that stretch reads HYRDNAITYK…TQKYINEQCR (129 aa). The stretch at 65 to 92 forms a coiled coil; sequence DAKYTKELADAKAENDALRDDVAAGRRR.

Belongs to the Lambdavirus i-spanin family. As to quaternary structure, homodimer; disulfide-linked. Interacts (via C-terminus) with the spanin outer lipoprotein subunit (via C-terminus). Part of the spanin complex which spans the entire periplasmic space. The spanin complex is composed of one homodimer of the i-spanin linked by intermolecular disulfide bonds involving two Cys residues and one homodimer of the o-spanin covalently linked by an intermolecular disulfide bond involving one Cys.

It localises to the host cell inner membrane. In terms of biological role, component of the spanin complex that disrupts the host outer membrane and participates in cell lysis during virus exit. The spanin complex conducts the final step in host lysis by disrupting the outer membrane after holin and endolysin have permeabilized the inner membrane and degraded the host peptidoglycans. Host outer membrane disruption is due to local fusion between the inner and outer membrane performed by the spanin complex. This chain is Spanin, inner membrane subunit (Rz), found in Escherichia phage lambda (Bacteriophage lambda).